A 512-amino-acid chain; its full sequence is Lysine--tRNA ligase (512 aa).

Mg(2+)-binding residues include Glu408 and Glu415.

Belongs to the class-II aminoacyl-tRNA synthetase family. Homodimer. Mg(2+) serves as cofactor.

It localises to the cytoplasm. It carries out the reaction tRNA(Lys) + L-lysine + ATP = L-lysyl-tRNA(Lys) + AMP + diphosphate. This is Lysine--tRNA ligase from Prochlorococcus marinus subsp. pastoris (strain CCMP1986 / NIES-2087 / MED4).